The following is a 60-amino-acid chain: Short neurotoxin 1 (60 aa).

Intrachain disulfides connect Cys3-Cys22, Cys17-Cys39, Cys41-Cys52, and Cys53-Cys58.

This sequence belongs to the three-finger toxin family. Short-chain subfamily. Type I alpha-neurotoxin sub-subfamily. In terms of tissue distribution, expressed by the venom gland.

The protein localises to the secreted. Binds to muscle nicotinic acetylcholine receptor (nAChR) and inhibit acetylcholine from binding to the receptor, thereby impairing neuromuscular transmission. The chain is Short neurotoxin 1 from Dendroaspis jamesoni kaimosae (Eastern Jameson's mamba).